Reading from the N-terminus, the 126-residue chain is Small ribosomal subunit protein uS13 (126 aa).

A disordered region spans residues 92–126 (HRRGLPVRGQRTKTNARTRKGPKRTVAGKKKAGRK).

This sequence belongs to the universal ribosomal protein uS13 family. In terms of assembly, part of the 30S ribosomal subunit. Forms a loose heterodimer with protein S19. Forms two bridges to the 50S subunit in the 70S ribosome.

Functionally, located at the top of the head of the 30S subunit, it contacts several helices of the 16S rRNA. In the 70S ribosome it contacts the 23S rRNA (bridge B1a) and protein L5 of the 50S subunit (bridge B1b), connecting the 2 subunits; these bridges are implicated in subunit movement. Contacts the tRNAs in the A and P-sites. The polypeptide is Small ribosomal subunit protein uS13 (Kineococcus radiotolerans (strain ATCC BAA-149 / DSM 14245 / SRS30216)).